The following is a 346-amino-acid chain: Nitrilase 1 (346 aa).

At Ser2 the chain carries N-acetylserine. The CN hydrolase domain maps to 25 to 297 (VRVTIVQSST…EGLVTADIDL (273 aa)). Glu65 (proton acceptor) is an active-site residue. Residue Lys152 is the Proton donor of the active site. Cys186 (nucleophile) is an active-site residue.

This sequence belongs to the carbon-nitrogen hydrolase superfamily. Nitrilase family. Interacts with DEK3. In terms of tissue distribution, expressed in cotyledons, hypocotyls, leaves, roots, stems, flowers and siliques.

The catalysed reaction is a nitrile + 2 H2O = a carboxylate + NH4(+). Its function is as follows. Can convert indole-3-acetonitrile to the plant hormone indole-3-acetic acid. The protein is Nitrilase 1 of Arabidopsis thaliana (Mouse-ear cress).